Consider the following 426-residue polypeptide: Phosphoribosylamine--glycine ligase (426 aa).

The 208-residue stretch at 113-320 (KSLMTEAKIP…LLELLYRAST (208 aa)) folds into the ATP-grasp domain. 139-200 (LESKSIPIVI…EEFMEGQEAS (62 aa)) provides a ligand contact to ATP. Positions 290 and 292 each coordinate Mg(2+).

Belongs to the GARS family. Mg(2+) serves as cofactor. Requires Mn(2+) as cofactor.

The enzyme catalyses 5-phospho-beta-D-ribosylamine + glycine + ATP = N(1)-(5-phospho-beta-D-ribosyl)glycinamide + ADP + phosphate + H(+). The protein operates within purine metabolism; IMP biosynthesis via de novo pathway; N(1)-(5-phospho-D-ribosyl)glycinamide from 5-phospho-alpha-D-ribose 1-diphosphate: step 2/2. In Leptospira interrogans serogroup Icterohaemorrhagiae serovar Lai (strain 56601), this protein is Phosphoribosylamine--glycine ligase.